A 284-amino-acid polypeptide reads, in one-letter code: Pseudouridine-5'-phosphate glycosidase (284 aa).

The active-site Proton donor is E8. Substrate is bound by residues K69 and V89. D119 contributes to the Mn(2+) binding site. Residue 121–123 (SQD) coordinates substrate. K140 functions as the Nucleophile in the catalytic mechanism.

It belongs to the pseudouridine-5'-phosphate glycosidase family. Homotrimer. Requires Mn(2+) as cofactor.

It carries out the reaction D-ribose 5-phosphate + uracil = psi-UMP + H2O. In terms of biological role, catalyzes the reversible cleavage of pseudouridine 5'-phosphate (PsiMP) to ribose 5-phosphate and uracil. Functions biologically in the cleavage direction, as part of a pseudouridine degradation pathway. In Pseudothermotoga lettingae (strain ATCC BAA-301 / DSM 14385 / NBRC 107922 / TMO) (Thermotoga lettingae), this protein is Pseudouridine-5'-phosphate glycosidase.